The following is a 609-amino-acid chain: Glutamine--fructose-6-phosphate aminotransferase [isomerizing] (609 aa).

The Nucleophile; for GATase activity role is filled by cysteine 2. The Glutamine amidotransferase type-2 domain occupies 2 to 218 (CGIVGAIAQR…EGDIAEITRR (217 aa)). SIS domains lie at 286–426 (ADDL…LKGL) and 458–599 (LAED…VDQP). Lysine 604 functions as the For Fru-6P isomerization activity in the catalytic mechanism.

In terms of assembly, homodimer.

It is found in the cytoplasm. It catalyses the reaction D-fructose 6-phosphate + L-glutamine = D-glucosamine 6-phosphate + L-glutamate. Functionally, catalyzes the first step in hexosamine metabolism, converting fructose-6P into glucosamine-6P using glutamine as a nitrogen source. The sequence is that of Glutamine--fructose-6-phosphate aminotransferase [isomerizing] from Salmonella typhi.